The following is a 622-amino-acid chain: uncharacterized protein (622 aa).

The span at 157-166 (LKESPLRDQQ) shows a compositional bias: basic and acidic residues. The interval 157–238 (LKESPLRDQQ…GLPDHNSISE (82 aa)) is disordered.

This is an uncharacterized protein from Homo sapiens (Human).